Consider the following 116-residue polypeptide: Ribonuclease P protein component (116 aa).

It belongs to the RnpA family. Consists of a catalytic RNA component (M1 or rnpB) and a protein subunit.

The enzyme catalyses Endonucleolytic cleavage of RNA, removing 5'-extranucleotides from tRNA precursor.. Functionally, RNaseP catalyzes the removal of the 5'-leader sequence from pre-tRNA to produce the mature 5'-terminus. It can also cleave other RNA substrates such as 4.5S RNA. The protein component plays an auxiliary but essential role in vivo by binding to the 5'-leader sequence and broadening the substrate specificity of the ribozyme. This Lachnoclostridium phytofermentans (strain ATCC 700394 / DSM 18823 / ISDg) (Clostridium phytofermentans) protein is Ribonuclease P protein component.